The following is a 321-amino-acid chain: Biotin synthase (321 aa).

Residues 45–271 (YYGKKVKLNM…INPTKEIRIA (227 aa)) enclose the Radical SAM core domain. [4Fe-4S] cluster contacts are provided by Cys-63, Cys-67, and Cys-70. The [2Fe-2S] cluster site is built by Cys-106, Cys-139, Cys-199, and Arg-269.

Belongs to the radical SAM superfamily. Biotin synthase family. As to quaternary structure, homodimer. [4Fe-4S] cluster serves as cofactor. [2Fe-2S] cluster is required as a cofactor.

The catalysed reaction is (4R,5S)-dethiobiotin + (sulfur carrier)-SH + 2 reduced [2Fe-2S]-[ferredoxin] + 2 S-adenosyl-L-methionine = (sulfur carrier)-H + biotin + 2 5'-deoxyadenosine + 2 L-methionine + 2 oxidized [2Fe-2S]-[ferredoxin]. The protein operates within cofactor biosynthesis; biotin biosynthesis; biotin from 7,8-diaminononanoate: step 2/2. Functionally, catalyzes the conversion of dethiobiotin (DTB) to biotin by the insertion of a sulfur atom into dethiobiotin via a radical-based mechanism. This chain is Biotin synthase, found in Staphylococcus epidermidis (strain ATCC 35984 / DSM 28319 / BCRC 17069 / CCUG 31568 / BM 3577 / RP62A).